A 598-amino-acid polypeptide reads, in one-letter code: UvrABC system protein C (598 aa).

The GIY-YIG domain maps to 14-91; the sequence is DSPGCYLHKD…IQKNMPKYNI (78 aa). The region spanning 196–231 is the UVR domain; that stretch reads DKIIEDLRSKMLAASEEMAFERAAEYRDLISGIATM.

It belongs to the UvrC family. As to quaternary structure, interacts with UvrB in an incision complex.

The protein resides in the cytoplasm. Functionally, the UvrABC repair system catalyzes the recognition and processing of DNA lesions. UvrC both incises the 5' and 3' sides of the lesion. The N-terminal half is responsible for the 3' incision and the C-terminal half is responsible for the 5' incision. The sequence is that of UvrABC system protein C from Streptococcus pyogenes serotype M12 (strain MGAS2096).